An 802-amino-acid chain; its full sequence is Valine--tRNA ligase (802 aa).

The short motif at 45–55 (PTISGQLHIGH) is the 'HIGH' region element. The 'KMSKS' region signature appears at 524-528 (KMSKS). Lys-527 contacts ATP.

Belongs to the class-I aminoacyl-tRNA synthetase family. ValS type 2 subfamily. In terms of assembly, monomer.

It is found in the cytoplasm. It catalyses the reaction tRNA(Val) + L-valine + ATP = L-valyl-tRNA(Val) + AMP + diphosphate. In terms of biological role, catalyzes the attachment of valine to tRNA(Val). As ValRS can inadvertently accommodate and process structurally similar amino acids such as threonine, to avoid such errors, it has a 'posttransfer' editing activity that hydrolyzes mischarged Thr-tRNA(Val) in a tRNA-dependent manner. This Ehrlichia canis (strain Jake) protein is Valine--tRNA ligase.